A 146-amino-acid chain; its full sequence is MALKVELKPHERIIVGNSVITNTDQRARLLIDGENVPILRERDILTPETANTPAKLVYLAVQLMYISPDPQTQHGTYFNLVRDIVTAVPSSWPIIEAINNNILNGDLYRALKDARKLIAYEEKLRGQYEATHPKAEADKDDVSTAA.

The protein belongs to the FlbT family.

Functionally, has a post-transcriptional repressor function in flagellum biogenesis. Associates with the 5'-UTR of fljK mRNA and promotes its degradation. The polypeptide is Probable flagellum biosynthesis repressor protein FlbT 1 (Bradyrhizobium diazoefficiens (strain JCM 10833 / BCRC 13528 / IAM 13628 / NBRC 14792 / USDA 110)).